The primary structure comprises 227 residues: MHKNGKFIPLLALGFTFFLSGCDYFADKHLVEEMKEQQKEQETKINLLEKQQKEQEAKINLLEKQQATIINTTKKVTEVVGRVERKQRLFDYTELDPSQTHYFIINNGNIGLAGRILSIEPIDNGSVIHLDLVNLLSIPVSNLAFNMTWGTKKPSEAKDLPRWKQLLLNTKMDSTIELLPGAWTNVTLTLKGVSPNNLKYLKIGIDMENVIFDSIQPINDTKKKPKK.

A signal peptide spans 1 to 21 (MHKNGKFIPLLALGFTFFLSG). The N-palmitoyl cysteine moiety is linked to residue C22. The S-diacylglycerol cysteine moiety is linked to residue C22. The stretch at 31 to 68 (VEEMKEQQKEQETKINLLEKQQKEQEAKINLLEKQQAT) forms a coiled coil.

Homotrimer.

The protein resides in the cell inner membrane. Functionally, required for proper surface expression of the autotransporter adhesin SadA. Could be directly involved in the biogenesis of functionally active SadA. This Salmonella typhimurium (strain LT2 / SGSC1412 / ATCC 700720) protein is Inner membrane lipoprotein SadB.